The chain runs to 479 residues: U2 small nuclear ribonucleoprotein auxiliary factor 35 kDa subunit-related protein 1 (479 aa).

Residues 1-63 form a disordered region; the sequence is MAALEKMTFP…EDTFIEEQQL (63 aa). Residues 20 to 37 show a composition bias toward basic residues; the sequence is SHKKYRAALKKEKRKKRR. Positions 50–63 are enriched in acidic residues; that stretch reads QEEEEDTFIEEQQL. Residue Lys67 forms a Glycyl lysine isopeptide (Lys-Gly) (interchain with G-Cter in SUMO2) linkage. The C3H1-type 1 zinc finger occupies 171-199; that stretch reads EKDRANCPFYSKTGACRFGDRCSRKHNFP. One can recognise an RRM domain in the interval 203–309; it reads PTLLIKSMFT…RQLQCEFCPV (107 aa). The C3H1-type 2 zinc-finger motif lies at 311–338; it reads RWKMAICGLFEIQQCPRGKHCNFLHVFR. Ser354 carries the post-translational modification Phosphoserine. Residues 356–479 are disordered; sequence DQTGSSFGKN…DRTVQSPQSK (124 aa). Basic and acidic residues-rich tracts occupy residues 365-379 and 388-403; these read NSER…DHYY and PSPD…SERK. Residue Ser389 is modified to Phosphoserine. Composition is skewed to basic residues over residues 404-417 and 442-451; these read KSSH…KRTS and SQSRRSHRSR.

The protein localises to the nucleus. The sequence is that of U2 small nuclear ribonucleoprotein auxiliary factor 35 kDa subunit-related protein 1 from Homo sapiens (Human).